A 376-amino-acid polypeptide reads, in one-letter code: Polar flagellin A (376 aa).

2 coiled-coil regions span residues 103-128 (SNSKAERVAIQEEVTALNDELNRIAE) and 310-338 (FQNRFNHAISNLDNINENVNASNSRIKDT).

Belongs to the bacterial flagellin family. In terms of assembly, heteromer of multiple flagellin subunits including FlaA, FlaB/D, FlaC, FlaE and FlaF.

The protein localises to the secreted. It localises to the bacterial flagellum. Functionally, flagellin is the subunit protein which polymerizes to form the filaments of bacterial flagella. FlaA is not essential for polar flagellar synthesis and swimming motility. Homomer of FlaA is able to form a functional filament. This Vibrio parahaemolyticus serotype O3:K6 (strain RIMD 2210633) protein is Polar flagellin A (flaA).